The sequence spans 371 residues: Queuine tRNA-ribosyltransferase (371 aa).

Catalysis depends on D90, which acts as the Proton acceptor. Substrate contacts are provided by residues 90–94 (DSGGF), D144, Q185, and G212. The segment at 243–249 (GVGTPED) is RNA binding. Residue D262 is the Nucleophile of the active site. Positions 267–271 (TRNAR) are RNA binding; important for wobble base 34 recognition. Zn(2+)-binding residues include C300, C302, C305, and H331.

It belongs to the queuine tRNA-ribosyltransferase family. Homodimer. Within each dimer, one monomer is responsible for RNA recognition and catalysis, while the other monomer binds to the replacement base PreQ1. The cofactor is Zn(2+).

The enzyme catalyses 7-aminomethyl-7-carbaguanine + guanosine(34) in tRNA = 7-aminomethyl-7-carbaguanosine(34) in tRNA + guanine. Its pathway is tRNA modification; tRNA-queuosine biosynthesis. Catalyzes the base-exchange of a guanine (G) residue with the queuine precursor 7-aminomethyl-7-deazaguanine (PreQ1) at position 34 (anticodon wobble position) in tRNAs with GU(N) anticodons (tRNA-Asp, -Asn, -His and -Tyr). Catalysis occurs through a double-displacement mechanism. The nucleophile active site attacks the C1' of nucleotide 34 to detach the guanine base from the RNA, forming a covalent enzyme-RNA intermediate. The proton acceptor active site deprotonates the incoming PreQ1, allowing a nucleophilic attack on the C1' of the ribose to form the product. After dissociation, two additional enzymatic reactions on the tRNA convert PreQ1 to queuine (Q), resulting in the hypermodified nucleoside queuosine (7-(((4,5-cis-dihydroxy-2-cyclopenten-1-yl)amino)methyl)-7-deazaguanosine). The chain is Queuine tRNA-ribosyltransferase from Acidithiobacillus ferrooxidans (strain ATCC 23270 / DSM 14882 / CIP 104768 / NCIMB 8455) (Ferrobacillus ferrooxidans (strain ATCC 23270)).